We begin with the raw amino-acid sequence, 260 residues long: Thrombin-like enzyme acutobin (260 aa).

A signal peptide spans 1-18 (MVLIRVLANLLILQLSYA). Positions 19–24 (QKSSEL) are excised as a propeptide. A Peptidase S1 domain is found at 25-251 (VIGGVECDIN…YNDWIRSITA (227 aa)). Disulfide bonds link Cys31-Cys165, Cys52-Cys68, Cys102-Cys258, Cys144-Cys212, Cys176-Cys191, and Cys202-Cys227. His67 functions as the Charge relay system in the catalytic mechanism. 2 N-linked (GlcNAc...) asparagine glycosylation sites follow: Asn101 and Asn105. Asp112 functions as the Charge relay system in the catalytic mechanism. Asn124 carries an N-linked (GlcNAc...) asparagine glycan. Catalysis depends on Ser206, which acts as the Charge relay system. Asn253 is a glycosylation site (N-linked (GlcNAc...) asparagine).

It belongs to the peptidase S1 family. Snake venom subfamily. Monomer. In terms of processing, N-glycosylated. In terms of tissue distribution, expressed by the venom gland.

Its subcellular location is the secreted. In terms of biological role, thrombin-like snake venom serine protease that coagulates human fibrinogen by hydrolysis of the alpha chains (FGA). The polypeptide is Thrombin-like enzyme acutobin (Deinagkistrodon acutus (Hundred-pace snake)).